The following is a 384-amino-acid chain: DNA polymerase IV (384 aa).

Positions 5-182 (IIHVDMDAFF…LPVTKVHGIG (178 aa)) constitute a UmuC domain. Positions 9, 10, and 103 each coordinate Mg(2+). The active site involves Glu-104.

This sequence belongs to the DNA polymerase type-Y family. Monomer. The cofactor is Mg(2+).

The protein resides in the cytoplasm. The catalysed reaction is DNA(n) + a 2'-deoxyribonucleoside 5'-triphosphate = DNA(n+1) + diphosphate. Its function is as follows. Poorly processive, error-prone DNA polymerase involved in translesion repair and untargeted mutagenesis. Copies undamaged DNA at stalled replication forks, which arise in vivo from mismatched or misaligned primer ends. These misaligned primers can be extended by PolIV. Exhibits no 3'-5' exonuclease (proofreading) activity. Involved in translesional synthesis. Primer extension fidelity in vitro is temperature-dependent. Inserts a correct base opposite templating bases at 70 degrees Celsius, but at 37 degrees Celsius in addition to correct base pairing, base transitions, transversions and frameshifts can occur. Preferably forms erroneous base pairs C:T. Bypasses 8-oxo-dG oxidative damage by incorporating dATP or dCTP opposite of the damaged DNA template site at both temperatures in vitro. The chain is DNA polymerase IV from Caldanaerobacter subterraneus subsp. tengcongensis (strain DSM 15242 / JCM 11007 / NBRC 100824 / MB4) (Thermoanaerobacter tengcongensis).